Consider the following 673-residue polypeptide: Ribonucleoprotein PTB-binding 2 (673 aa).

A compositionally biased stretch (gly residues) spans 1–17; that stretch reads MAARGGGAGGAGSGSGP. Residues 1-34 are disordered; sequence MAARGGGAGGAGSGSGPSAGTAGEAAEPALRPGE. Low complexity predominate over residues 18–29; it reads SAGTAGEAAEPA. 3 consecutive RRM domains span residues 58–129, 131–209, and 220–298; these read RKIL…LQPT, ALLC…WMDV, and KCLC…FCAP. The interval 481-549 is disordered; it reads QLPAGQAGPG…KGTEVASKNQ (69 aa). A compositionally biased stretch (low complexity) spans 499-512; it reads SASVSISEASFSGS. Residues 529–549 are compositionally biased toward polar residues; the sequence is TGNQKTPQSQPKGTEVASKNQ.

Interacts with PTBP1 and RAVER1. Expressed throughout embryogenesis. Detected at low levels in adult lung, brain and kidney, but not in the other tissues tested.

The protein resides in the nucleus. The protein localises to the cytoplasm. Its function is as follows. May bind single-stranded nucleic acids. The sequence is that of Ribonucleoprotein PTB-binding 2 (Raver2) from Mus musculus (Mouse).